The following is a 470-amino-acid chain: Velvet complex subunit B (470 aa).

Disordered regions lie at residues 1-148 (MNSS…EEGT) and 223-321 (VRSS…NPLF). Positions 15–37 (PGPGYSSSVPPPIHAYQQQQQHQ) are enriched in low complexity. The segment covering 38 to 49 (HPPPSLLPPPPT) has biased composition (pro residues). Residues 74-86 (HQHHAPPPPHHHS) show a composition bias toward basic residues. Residues 102 to 124 (NQYPRPHPLPPSRNDEPPPPSSE) are compositionally biased toward pro residues. A Velvet domain is found at 147 to 452 (GTGLKYSLDV…ALQGIKIPIR (306 aa)). Over residues 232–241 (GASSNNYSYS) the composition is skewed to low complexity. Over residues 242-255 (TLEPSTPSYQQQAL) the composition is skewed to polar residues. Residues 280–301 (QQGYGQAPSYQSSSSYGPPQQY) show a composition bias toward low complexity. A compositionally biased stretch (polar residues) spans 307–318 (GYNTDPPASSAN).

This sequence belongs to the velvet family. VelB subfamily. Component of the heterotrimeric velvet complex composed of laeA, veA and velB; VeA acting as a bridging protein between laeA and velB. Forms a heterodimeric complex with vosA; the formation of the velB-vosA complex is light-dependent.

Its subcellular location is the nucleus. The protein localises to the cytoplasm. Functionally, component of the velvet transcription factor complex that controls sexual/asexual developmental ratio in response to light, promoting sexual development in the darkness while stimulating asexual sporulation under illumination. The velvet complex acts as a global regulator for secondary metabolite gene expression. Component of the velB-VosA heterodimeric complex that plays a dual role in activating genes associated with spore maturation and repressing certain development-associated genes. The complex binds DNA through the DNA-binding domain of vosA that recognizes an 11-nucleotide consensus sequence 5'-CTGGCCGCGGC-3' consisting of two motifs in the promoters of key developmental regulatory genes. Controls the expression of the pink pigment aurofusarin and the mycotoxin deoxynivalenol gene clusters. Regulates hyphae formation, hyphal hydrophobicity and conidiation. Regulates of cell wall integrity and pathogenicity. This chain is Velvet complex subunit B, found in Gibberella zeae (strain ATCC MYA-4620 / CBS 123657 / FGSC 9075 / NRRL 31084 / PH-1) (Wheat head blight fungus).